We begin with the raw amino-acid sequence, 641 residues long: Fibrinogen alpha-2 chain (641 aa).

Residues 1 to 23 (MTLRGVSMVLTWCLLVSKAWSSG) form the signal peptide. A coiled-coil region spans residues 107-226 (SVSDVSNQVV…IVHESFSVER (120 aa)). Residues 228–327 (DARSLHPYSG…QKTEELSFKK (100 aa)) are disordered. Asn-271 carries an N-linked (GlcNAc...) asparagine glycan. The span at 279–289 (VDERSKVEKDV) shows a compositional bias: basic and acidic residues. Residues 293–317 (STSSVSSSSSSSSSSSSTSSTISST) are compositionally biased toward low complexity. The 242-residue stretch at 395–636 (RTNLSEYIDC…RTAVRFRRVQ (242 aa)) folds into the Fibrinogen C-terminal domain. Residue Asn-397 is glycosylated (N-linked (GlcNAc...) asparagine). Cys-404 and Cys-435 are disulfide-bonded. The N-linked (GlcNAc...) asparagine glycan is linked to Asn-458. Cys-571 and Cys-584 form a disulfide bridge.

Heterohexamer; disulfide linked. Contains 2 sets of 3 non-identical chains (alpha, beta and gamma). The 2 heterotrimers are in head to head conformation with the N-termini in a small central domain. Post-translationally, conversion of fibrinogen to fibrin is triggered by thrombin, which cleaves fibrinopeptides A and B from alpha and beta chains, and thus exposes the N-terminal polymerization sites responsible for the formation of the soft clot. The soft clot is converted into the hard clot by factor XIIIA which catalyzes the epsilon-(gamma-glutamyl)lysine cross-linking between gamma chains (stronger) and between alpha chains (weaker) of different monomers. In terms of processing, forms F13A-mediated cross-links between a glutamine and the epsilon-amino group of a lysine residue, forming fibronectin-fibrinogen heteropolymers.

It is found in the secreted. Fibrinogen has a double function: yielding monomers that polymerize into fibrin and acting as a cofactor in platelet aggregation. The chain is Fibrinogen alpha-2 chain from Petromyzon marinus (Sea lamprey).